Reading from the N-terminus, the 220-residue chain is ATP phosphoribosyltransferase (220 aa).

It belongs to the ATP phosphoribosyltransferase family. Short subfamily. As to quaternary structure, heteromultimer composed of HisG and HisZ subunits.

The protein localises to the cytoplasm. It carries out the reaction 1-(5-phospho-beta-D-ribosyl)-ATP + diphosphate = 5-phospho-alpha-D-ribose 1-diphosphate + ATP. It functions in the pathway amino-acid biosynthesis; L-histidine biosynthesis; L-histidine from 5-phospho-alpha-D-ribose 1-diphosphate: step 1/9. Catalyzes the condensation of ATP and 5-phosphoribose 1-diphosphate to form N'-(5'-phosphoribosyl)-ATP (PR-ATP). Has a crucial role in the pathway because the rate of histidine biosynthesis seems to be controlled primarily by regulation of HisG enzymatic activity. This Prochlorococcus marinus (strain NATL1A) protein is ATP phosphoribosyltransferase.